The sequence spans 200 residues: Putative 3-methyladenine DNA glycosylase (200 aa).

The protein belongs to the DNA glycosylase MPG family.

The polypeptide is Putative 3-methyladenine DNA glycosylase (Rhodopseudomonas palustris (strain BisB18)).